The following is a 304-amino-acid chain: Ribosomal RNA small subunit methyltransferase H (304 aa).

S-adenosyl-L-methionine is bound by residues 47–49 (GGH), Asp66, Phe93, Asp108, and Gln115.

Belongs to the methyltransferase superfamily. RsmH family.

It is found in the cytoplasm. It catalyses the reaction cytidine(1402) in 16S rRNA + S-adenosyl-L-methionine = N(4)-methylcytidine(1402) in 16S rRNA + S-adenosyl-L-homocysteine + H(+). Functionally, specifically methylates the N4 position of cytidine in position 1402 (C1402) of 16S rRNA. The sequence is that of Ribosomal RNA small subunit methyltransferase H from Prochlorococcus marinus (strain NATL2A).